Reading from the N-terminus, the 151-residue chain is Large ribosomal subunit protein uL16 (151 aa).

Belongs to the universal ribosomal protein uL16 family. Part of the 50S ribosomal subunit.

Binds 23S rRNA and is also seen to make contacts with the A and possibly P site tRNAs. This Chloroflexus aurantiacus (strain ATCC 29364 / DSM 637 / Y-400-fl) protein is Large ribosomal subunit protein uL16.